Consider the following 364-residue polypeptide: Peptide chain release factor 2 (364 aa).

N5-methylglutamine is present on Gln251.

This sequence belongs to the prokaryotic/mitochondrial release factor family. In terms of processing, methylated by PrmC. Methylation increases the termination efficiency of RF2.

The protein localises to the cytoplasm. In terms of biological role, peptide chain release factor 2 directs the termination of translation in response to the peptide chain termination codons UGA and UAA. In Campylobacter hominis (strain ATCC BAA-381 / DSM 21671 / CCUG 45161 / LMG 19568 / NCTC 13146 / CH001A), this protein is Peptide chain release factor 2.